Here is a 418-residue protein sequence, read N- to C-terminus: 3-isopropylmalate dehydratase large subunit (418 aa).

Residues C299, C359, and C362 each coordinate [4Fe-4S] cluster.

Belongs to the aconitase/IPM isomerase family. LeuC type 2 subfamily. Heterodimer of LeuC and LeuD. Requires [4Fe-4S] cluster as cofactor.

The catalysed reaction is (2R,3S)-3-isopropylmalate = (2S)-2-isopropylmalate. It participates in amino-acid biosynthesis; L-leucine biosynthesis; L-leucine from 3-methyl-2-oxobutanoate: step 2/4. Catalyzes the isomerization between 2-isopropylmalate and 3-isopropylmalate, via the formation of 2-isopropylmaleate. In Nitratidesulfovibrio vulgaris (strain DSM 19637 / Miyazaki F) (Desulfovibrio vulgaris), this protein is 3-isopropylmalate dehydratase large subunit.